Here is a 155-residue protein sequence, read N- to C-terminus: CASP-like protein 5B2 (155 aa).

At 1–18 the chain is on the cytoplasmic side; the sequence is MWEVAWWRPGTWGGLAMR. A helical transmembrane segment spans residues 19-39; sequence VGQVAFAGASIGVMASGAGFA. N40 is a glycosylation site (N-linked (GlcNAc...) asparagine). The Extracellular portion of the chain corresponds to 40 to 43; sequence NYTA. A helical transmembrane segment spans residues 44 to 64; sequence FCYLIASMGLQSLWSLGLACL. Topologically, residues 65-77 are cytoplasmic; that stretch reads DVYALTVKRDLNN. A helical membrane pass occupies residues 78–98; the sequence is ALLVSLFVIGDWVTALLSFAA. The Extracellular portion of the chain corresponds to 99 to 128; sequence SCSAGGVMVLFKRDVLFCRRYPQLPCGRFE. The helical transmembrane segment at 129 to 149 threads the bilayer; it reads LAVALAFLSWALSATSAIIMF. The Cytoplasmic portion of the chain corresponds to 150 to 155; the sequence is CLLAAF.

This sequence belongs to the Casparian strip membrane proteins (CASP) family. In terms of assembly, homodimer and heterodimers.

The protein localises to the cell membrane. This Oryza sativa subsp. indica (Rice) protein is CASP-like protein 5B2.